Consider the following 451-residue polypeptide: Type 3 secretion system ATPase (451 aa).

Residue 184-189 coordinates ATP; sequence GGGKST.

This sequence belongs to the ATPase alpha/beta chains family. T3SS ATPase subfamily. In terms of assembly, the core secretion machinery of the T3SS is composed of approximately 20 different proteins, including cytoplasmic components, a base, an export apparatus and a needle. This subunit is part of the cytosolic complex. Forms homohexamers.

Its subcellular location is the cytoplasm. The enzyme catalyses ATP + H2O + cellular proteinSide 1 = ADP + phosphate + cellular proteinSide 2.. In terms of biological role, ATPase component of the type III secretion system (T3SS), also called injectisome, which is used to inject bacterial effector proteins into eukaryotic host cells. Acts as a molecular motor to provide the energy that is required for the export of proteins. Required for type III secretion apparatus (T3SA) formation, proper protein secretion, host cell invasion and virulence. May play a critical role in T3SS substrate recognition, disassembly of the effector/chaperone complex and unfolding of the effector in an ATP-dependent manner prior to secretion. In Sinorhizobium fredii (strain NBRC 101917 / NGR234), this protein is Type 3 secretion system ATPase.